We begin with the raw amino-acid sequence, 203 residues long: Ribosomal RNA large subunit methyltransferase E (203 aa).

Residues Gly51, Trp53, Asp69, Asp85, and Asp108 each contribute to the S-adenosyl-L-methionine site. The Proton acceptor role is filled by Lys148.

The protein belongs to the class I-like SAM-binding methyltransferase superfamily. RNA methyltransferase RlmE family.

The protein resides in the cytoplasm. It catalyses the reaction uridine(2552) in 23S rRNA + S-adenosyl-L-methionine = 2'-O-methyluridine(2552) in 23S rRNA + S-adenosyl-L-homocysteine + H(+). Specifically methylates the uridine in position 2552 of 23S rRNA at the 2'-O position of the ribose in the fully assembled 50S ribosomal subunit. The sequence is that of Ribosomal RNA large subunit methyltransferase E from Methanocorpusculum labreanum (strain ATCC 43576 / DSM 4855 / Z).